A 623-amino-acid chain; its full sequence is Xaa-Pro aminopeptidase 1 (623 aa).

Residue R77 participates in a peptide binding. K304 is modified (N6-acetyllysine). H395 is a binding site for a peptide. 3 residues coordinate Mn(2+): D415, D426, and H489. The a peptide site is built by H489, H498, and E523. Mn(2+)-binding residues include E523 and E537.

This sequence belongs to the peptidase M24B family. Homodimer. It depends on Mn(2+) as a cofactor.

It is found in the cytoplasm. Its subcellular location is the cytosol. It catalyses the reaction Release of any N-terminal amino acid, including proline, that is linked to proline, even from a dipeptide or tripeptide.. Its function is as follows. Metalloaminopeptidase that catalyzes the removal of a penultimate prolyl residue from the N-termini of peptides, such as Arg-Pro-Pro. Contributes to the degradation of bradykinin. This chain is Xaa-Pro aminopeptidase 1, found in Mus musculus (Mouse).